The chain runs to 181 residues: Large ribosomal subunit protein uL5 (181 aa).

This sequence belongs to the universal ribosomal protein uL5 family. In terms of assembly, part of the 50S ribosomal subunit; part of the 5S rRNA/L5/L18/L25 subcomplex. Contacts the 5S rRNA and the P site tRNA. Forms a bridge to the 30S subunit in the 70S ribosome.

Its function is as follows. This is one of the proteins that bind and probably mediate the attachment of the 5S RNA into the large ribosomal subunit, where it forms part of the central protuberance. In the 70S ribosome it contacts protein S13 of the 30S subunit (bridge B1b), connecting the 2 subunits; this bridge is implicated in subunit movement. Contacts the P site tRNA; the 5S rRNA and some of its associated proteins might help stabilize positioning of ribosome-bound tRNAs. The sequence is that of Large ribosomal subunit protein uL5 from Helicobacter hepaticus (strain ATCC 51449 / 3B1).